Here is a 329-residue protein sequence, read N- to C-terminus: Holliday junction branch migration complex subunit RuvB (329 aa).

The large ATPase domain (RuvB-L) stretch occupies residues 1 to 181 (MNELLHQHKA…FGIPLHLEFY (181 aa)). Residues leucine 20, arginine 21, glycine 62, lysine 65, threonine 66, threonine 67, arginine 171, tyrosine 181, and arginine 218 each coordinate ATP. Position 66 (threonine 66) interacts with Mg(2+). The segment at 182-252 (SVEELMLVIK…FADSALFNLG (71 aa)) is small ATPAse domain (RuvB-S). The tract at residues 255-329 (KSGLDKMDIK…IEHLMNYKYI (75 aa)) is head domain (RuvB-H). 2 residues coordinate DNA: arginine 308 and arginine 313.

Belongs to the RuvB family. In terms of assembly, homohexamer. Forms an RuvA(8)-RuvB(12)-Holliday junction (HJ) complex. HJ DNA is sandwiched between 2 RuvA tetramers; dsDNA enters through RuvA and exits via RuvB. An RuvB hexamer assembles on each DNA strand where it exits the tetramer. Each RuvB hexamer is contacted by two RuvA subunits (via domain III) on 2 adjacent RuvB subunits; this complex drives branch migration. In the full resolvosome a probable DNA-RuvA(4)-RuvB(12)-RuvC(2) complex forms which resolves the HJ.

The protein resides in the cytoplasm. The enzyme catalyses ATP + H2O = ADP + phosphate + H(+). The RuvA-RuvB-RuvC complex processes Holliday junction (HJ) DNA during genetic recombination and DNA repair, while the RuvA-RuvB complex plays an important role in the rescue of blocked DNA replication forks via replication fork reversal (RFR). RuvA specifically binds to HJ cruciform DNA, conferring on it an open structure. The RuvB hexamer acts as an ATP-dependent pump, pulling dsDNA into and through the RuvAB complex. RuvB forms 2 homohexamers on either side of HJ DNA bound by 1 or 2 RuvA tetramers; 4 subunits per hexamer contact DNA at a time. Coordinated motions by a converter formed by DNA-disengaged RuvB subunits stimulates ATP hydrolysis and nucleotide exchange. Immobilization of the converter enables RuvB to convert the ATP-contained energy into a lever motion, pulling 2 nucleotides of DNA out of the RuvA tetramer per ATP hydrolyzed, thus driving DNA branch migration. The RuvB motors rotate together with the DNA substrate, which together with the progressing nucleotide cycle form the mechanistic basis for DNA recombination by continuous HJ branch migration. Branch migration allows RuvC to scan DNA until it finds its consensus sequence, where it cleaves and resolves cruciform DNA. This Anaplasma phagocytophilum (strain HZ) protein is Holliday junction branch migration complex subunit RuvB.